A 654-amino-acid chain; its full sequence is Phosphate transport system permease protein PstA homolog (654 aa).

12 helical membrane passes run 22–42 (LAFL…TEAT), 64–84 (AGIW…LIIA), 113–133 (ILSG…LSIF), 143–163 (LSLL…VISL), 266–286 (VLYI…FFAI), 303–323 (ISNF…ALFV), 368–388 (ELIC…FVFI), 417–437 (LVII…IAIW), 453–473 (FVID…GLSF), 486–506 (NGTS…LFLI), 535–555 (IFKI…ILSI), and 613–633 (VVFL…LFLL). Positions 70 to 285 (LLVSFIVSIG…ILVSLLNFFA (216 aa)) constitute an ABC transmembrane type-1 1 domain. The ABC transmembrane type-1 2 domain occupies 413–623 (LVNTLVIILI…VFLILLIFFS (211 aa)).

This sequence belongs to the binding-protein-dependent transport system permease family. CysTW subfamily.

It is found in the cell membrane. In terms of biological role, could be part of a binding-protein-dependent transport system for phosphate; probably responsible for the translocation of the substrate across the membrane. The chain is Phosphate transport system permease protein PstA homolog (pstA) from Mycoplasma genitalium (strain ATCC 33530 / DSM 19775 / NCTC 10195 / G37) (Mycoplasmoides genitalium).